Here is a 476-residue protein sequence, read N- to C-terminus: Glutamyl-tRNA(Gln) amidotransferase subunit A (476 aa).

Residues lysine 69 and serine 144 each act as charge relay system in the active site. Catalysis depends on serine 168, which acts as the Acyl-ester intermediate.

It belongs to the amidase family. GatA subfamily. As to quaternary structure, heterotrimer of A, B and C subunits.

The enzyme catalyses L-glutamyl-tRNA(Gln) + L-glutamine + ATP + H2O = L-glutaminyl-tRNA(Gln) + L-glutamate + ADP + phosphate + H(+). Functionally, allows the formation of correctly charged Gln-tRNA(Gln) through the transamidation of misacylated Glu-tRNA(Gln) in organisms which lack glutaminyl-tRNA synthetase. The reaction takes place in the presence of glutamine and ATP through an activated gamma-phospho-Glu-tRNA(Gln). In Sulfolobus acidocaldarius (strain ATCC 33909 / DSM 639 / JCM 8929 / NBRC 15157 / NCIMB 11770), this protein is Glutamyl-tRNA(Gln) amidotransferase subunit A.